The primary structure comprises 509 residues: Poly(A) RNA polymerase GLD2-B (509 aa).

The disordered stretch occupies residues 88-125 (PGSPPSSFQNRKRRSDEGNSPYDVKRQRFQSPQEQTVN). Over residues 116 to 125 (FQSPQEQTVN) the composition is skewed to polar residues. Mg(2+) is bound by residues D240 and D242. Residues 409–462 (LGDLLLGFLKYFAVEFDWSKDIISLREAKALPRTDDYEWRNKYICVEEPFDGSN) enclose the PAP-associated domain.

The protein belongs to the DNA polymerase type-B-like family. GLD2 subfamily. In terms of assembly, component of a complex at least composed of cpeb1, cpsf1, tent2/gld2, pabpc1/ePAB, parn and sympk. Following oocyte maturation, parn is expelled from the complex. Interacts with rbfox2. Interacts with sympk. The cofactor is Mg(2+). Mn(2+) serves as cofactor.

The protein localises to the cytoplasm. It carries out the reaction RNA(n) + ATP = RNA(n)-3'-adenine ribonucleotide + diphosphate. In terms of biological role, cytoplasmic poly(A) RNA polymerase that adds successive AMP monomers to the 3'-end of specific RNAs, forming a poly(A) tail. In contrast to the canonical nuclear poly(A) RNA polymerase, it only adds poly(A) to selected cytoplasmic mRNAs during oocyte maturation. Plays a central role during oocyte maturation by mediating polyadenylation of dormant mRNAs, which contain 5'AAUAAA-3' sequence in their 3'-UTR. In immature oocytes, polyadenylation of poly(A) tails is counteracted by the ribonuclease parn. During maturation parn is excluded from the ribonucleoprotein complex, allowing poly(A) elongation and activation of mRNAs. May not play a role in replication-dependent histone mRNA degradation. The protein is Poly(A) RNA polymerase GLD2-B of Xenopus laevis (African clawed frog).